A 406-amino-acid chain; its full sequence is tRNA-specific 2-thiouridylase MnmA (406 aa).

Residues 6-13 (AMSGGVDS) and Leu-32 each bind ATP. Residue Cys-101 is the Nucleophile of the active site. Cysteines 101 and 193 form a disulfide. Gly-125 provides a ligand contact to ATP. An interaction with tRNA region spans residues 143–145 (KDQ). Cys-193 (cysteine persulfide intermediate) is an active-site residue. A disordered region spans residues 378–406 (GAPIEEQPAPGTVGAVDADAIEQGEDAQR). Residues 396–406 (DAIEQGEDAQR) are compositionally biased toward acidic residues.

Belongs to the MnmA/TRMU family.

The protein resides in the cytoplasm. It carries out the reaction S-sulfanyl-L-cysteinyl-[protein] + uridine(34) in tRNA + AH2 + ATP = 2-thiouridine(34) in tRNA + L-cysteinyl-[protein] + A + AMP + diphosphate + H(+). Catalyzes the 2-thiolation of uridine at the wobble position (U34) of tRNA, leading to the formation of s(2)U34. The protein is tRNA-specific 2-thiouridylase MnmA of Corynebacterium urealyticum (strain ATCC 43042 / DSM 7109).